Here is a 224-residue protein sequence, read N- to C-terminus: Small ribosomal subunit protein uS13 (224 aa).

The segment covering M1–E17 has biased composition (basic and acidic residues). Disordered stretches follow at residues M1–K64 and H184–K224. Composition is skewed to low complexity over residues E20–K30 and A38–D47. A compositionally biased stretch (basic and acidic residues) spans K210–K224.

This sequence belongs to the universal ribosomal protein uS13 family. As to quaternary structure, part of the 30S ribosomal subunit. Forms a loose heterodimer with protein S19. Forms two bridges to the 50S subunit in the 70S ribosome.

Its function is as follows. Located at the top of the head of the 30S subunit, it contacts several helices of the 16S rRNA. In the 70S ribosome it contacts the 23S rRNA (bridge B1a) and protein L5 of the 50S subunit (bridge B1b), connecting the 2 subunits; these bridges are implicated in subunit movement. This Methanocella arvoryzae (strain DSM 22066 / NBRC 105507 / MRE50) protein is Small ribosomal subunit protein uS13.